A 178-amino-acid polypeptide reads, in one-letter code: Large ribosomal subunit protein uL6 (178 aa).

It belongs to the universal ribosomal protein uL6 family. Part of the 50S ribosomal subunit.

This protein binds to the 23S rRNA, and is important in its secondary structure. It is located near the subunit interface in the base of the L7/L12 stalk, and near the tRNA binding site of the peptidyltransferase center. The chain is Large ribosomal subunit protein uL6 from Streptococcus uberis (strain ATCC BAA-854 / 0140J).